Here is a 197-residue protein sequence, read N- to C-terminus: Xanthine phosphoribosyltransferase (197 aa).

Residues Leu20 and Asn27 each coordinate xanthine. Residue 128-132 participates in 5-phospho-alpha-D-ribose 1-diphosphate binding; that stretch reads ANGQA. Lys156 serves as a coordination point for xanthine.

It belongs to the purine/pyrimidine phosphoribosyltransferase family. Xpt subfamily. Homodimer.

The protein resides in the cytoplasm. It catalyses the reaction XMP + diphosphate = xanthine + 5-phospho-alpha-D-ribose 1-diphosphate. It participates in purine metabolism; XMP biosynthesis via salvage pathway; XMP from xanthine: step 1/1. Its function is as follows. Converts the preformed base xanthine, a product of nucleic acid breakdown, to xanthosine 5'-monophosphate (XMP), so it can be reused for RNA or DNA synthesis. The protein is Xanthine phosphoribosyltransferase of Bacillus cereus (strain G9842).